Consider the following 136-residue polypeptide: MARTKQTARKSTGGKAPRKQLATKAARKSAPTTGGVKKPHRYRPGTVALREIRRYQKSTELLIRKLPFQRLVREIAQDFKTDLRFQSAAIGALQEASEAYLVGLFEDTNLCAIHAKRVTIMPKDIQLARRIRGERA.

The segment at 1–43 (MARTKQTARKSTGGKAPRKQLATKAARKSAPTTGGVKKPHRYR) is disordered. Residues K5 and K10 each carry the N6,N6,N6-trimethyllysine; alternate modification. Residues K5 and K10 each carry the N6,N6-dimethyllysine; alternate modification. K5 and K10 each carry N6-acetyllysine; alternate. N6-methyllysine; alternate is present on K5. Residue S11 is modified to Phosphoserine. Residues K15 and K24 each carry the N6-acetyllysine modification. K28 is subject to N6,N6,N6-trimethyllysine; alternate. K28 carries the N6,N6-dimethyllysine; alternate modification. Position 28 is an N6-methyllysine; alternate (K28). Phosphoserine is present on S29. K37 carries the post-translational modification N6,N6,N6-trimethyllysine; alternate. N6-methyllysine; alternate is present on K37. K80 carries the N6-methyllysine modification.

It belongs to the histone H3 family. In terms of assembly, the nucleosome is a histone octamer containing two molecules each of H2A, H2B, H3 and H4 assembled in one H3-H4 heterotetramer and two H2A-H2B heterodimers. The octamer wraps approximately 147 bp of DNA. Post-translationally, acetylation is generally linked to gene activation. Methylation at Lys-5 is linked to gene activation. Methylation at Lys-10 is linked to gene repression. In terms of tissue distribution, highly expressed in all adult nuclei.

It localises to the nucleus. Its subcellular location is the chromosome. In terms of biological role, variant histone H3 which replaces conventional H3 in a wide range of nucleosomes in active genes. Constitutes the predominant form of histone H3 in non-dividing cells and is incorporated into chromatin independently of DNA synthesis. Deposited at sites of nucleosomal displacement throughout transcribed genes, suggesting that it represents an epigenetic imprint of transcriptionally active chromatin. Nucleosomes wrap and compact DNA into chromatin, limiting DNA accessibility to the cellular machineries which require DNA as a template. Histones thereby play a central role in transcription regulation, DNA repair, DNA replication and chromosomal stability. DNA accessibility is regulated via a complex set of post-translational modifications of histones, also called histone code, and nucleosome remodeling. This Caenorhabditis elegans protein is Histone H3.3 type 1 (his-71).